A 218-amino-acid chain; its full sequence is Hypoxanthine-guanine phosphoribosyltransferase (218 aa).

GMP is bound by residues Lys-69, 134 to 142 (EDIIDTGKT), Lys-166, 186 to 188 (KFV), and Asp-194. The active-site Proton acceptor is Asp-138. Asp-194 lines the Mg(2+) pocket.

It belongs to the purine/pyrimidine phosphoribosyltransferase family. Homotetramer. The cofactor is Mg(2+).

It is found in the cytoplasm. The catalysed reaction is IMP + diphosphate = hypoxanthine + 5-phospho-alpha-D-ribose 1-diphosphate. It carries out the reaction GMP + diphosphate = guanine + 5-phospho-alpha-D-ribose 1-diphosphate. It participates in purine metabolism; IMP biosynthesis via salvage pathway; IMP from hypoxanthine: step 1/1. In terms of biological role, converts guanine to guanosine monophosphate, and hypoxanthine to inosine monophosphate. Transfers the 5-phosphoribosyl group from 5-phosphoribosylpyrophosphate onto the purine. Plays a central role in the generation of purine nucleotides through the purine salvage pathway. The protein is Hypoxanthine-guanine phosphoribosyltransferase (HPRT1) of Gallus gallus (Chicken).